We begin with the raw amino-acid sequence, 131 residues long: Putative gamma-taxilin 2 (131 aa).

It belongs to the taxilin family.

This is Putative gamma-taxilin 2 (TXLNGY) from Pan troglodytes (Chimpanzee).